Consider the following 196-residue polypeptide: MSNQIKLLVGLANPGLEYKRTRHNAGAWVVEELARIHNIPMREEAKFFGLTGRIQTNGQDLRLLIPTTFMNLSGKAIASIAKFYQIKPEEILVAHDELDLPPGVAKFKKGGGHGGHNGLRDTISKLANTKEFYRLRIGIGHPGHKDKVAGFVLGKAPTKEQELIDAAVDESTRCLDILLKDGLSKAQNRLHTFKAE.

Residue Tyr18 participates in tRNA binding. His23 (proton acceptor) is an active-site residue. 3 residues coordinate tRNA: Phe69, Asn71, and Asn117.

This sequence belongs to the PTH family. As to quaternary structure, monomer.

It is found in the cytoplasm. It catalyses the reaction an N-acyl-L-alpha-aminoacyl-tRNA + H2O = an N-acyl-L-amino acid + a tRNA + H(+). In terms of biological role, hydrolyzes ribosome-free peptidyl-tRNAs (with 1 or more amino acids incorporated), which drop off the ribosome during protein synthesis, or as a result of ribosome stalling. Its function is as follows. Catalyzes the release of premature peptidyl moieties from peptidyl-tRNA molecules trapped in stalled 50S ribosomal subunits, and thus maintains levels of free tRNAs and 50S ribosomes. The chain is Peptidyl-tRNA hydrolase from Aliivibrio salmonicida (strain LFI1238) (Vibrio salmonicida (strain LFI1238)).